The chain runs to 324 residues: Probable pectinesterase A (324 aa).

Residues 1–19 form the signal peptide; that stretch reads MHLPSLVLGLLGLGLTASA. N-linked (GlcNAc...) asparagine glycosylation is present at N27. Substrate is bound at residue Q142. The Proton donor role is filled by D165. D186 serves as the catalytic Nucleophile. N191 carries N-linked (GlcNAc...) asparagine glycosylation. Substrate contacts are provided by R246 and W248.

The protein belongs to the pectinesterase family.

It is found in the secreted. The catalysed reaction is [(1-&gt;4)-alpha-D-galacturonosyl methyl ester](n) + n H2O = [(1-&gt;4)-alpha-D-galacturonosyl](n) + n methanol + n H(+). It functions in the pathway glycan metabolism; pectin degradation; 2-dehydro-3-deoxy-D-gluconate from pectin: step 1/5. In terms of biological role, involved in maceration and soft-rotting of plant tissue. The chain is Probable pectinesterase A (pmeA) from Neosartorya fischeri (strain ATCC 1020 / DSM 3700 / CBS 544.65 / FGSC A1164 / JCM 1740 / NRRL 181 / WB 181) (Aspergillus fischerianus).